Here is a 175-residue protein sequence, read N- to C-terminus: Transcriptional repressor NrdR (175 aa).

A zinc finger lies at 3 to 32 (CPYCSHPDTKVIDSRDVDDGVRRRRECVVC). The 91-residue stretch at 47–137 (LFVVKKDQRR…VYREFTDITQ (91 aa)) folds into the ATP-cone domain.

This sequence belongs to the NrdR family. Zn(2+) serves as cofactor.

Its function is as follows. Negatively regulates transcription of bacterial ribonucleotide reductase nrd genes and operons by binding to NrdR-boxes. In Dehalococcoides mccartyi (strain ATCC BAA-2266 / KCTC 15142 / 195) (Dehalococcoides ethenogenes (strain 195)), this protein is Transcriptional repressor NrdR.